The primary structure comprises 190 residues: Spermatogenesis-associated protein 12 (190 aa).

As to expression, expressed in testis.

The protein is Spermatogenesis-associated protein 12 (SPATA12) of Homo sapiens (Human).